Here is a 245-residue protein sequence, read N- to C-terminus: 1-(5-phosphoribosyl)-5-[(5-phosphoribosylamino)methylideneamino] imidazole-4-carboxamide isomerase (245 aa).

D11 (proton acceptor) is an active-site residue. The Proton donor role is filled by D132.

This sequence belongs to the HisA/HisF family.

The protein localises to the cytoplasm. It catalyses the reaction 1-(5-phospho-beta-D-ribosyl)-5-[(5-phospho-beta-D-ribosylamino)methylideneamino]imidazole-4-carboxamide = 5-[(5-phospho-1-deoxy-D-ribulos-1-ylimino)methylamino]-1-(5-phospho-beta-D-ribosyl)imidazole-4-carboxamide. It participates in amino-acid biosynthesis; L-histidine biosynthesis; L-histidine from 5-phospho-alpha-D-ribose 1-diphosphate: step 4/9. This Xanthobacter autotrophicus (strain ATCC BAA-1158 / Py2) protein is 1-(5-phosphoribosyl)-5-[(5-phosphoribosylamino)methylideneamino] imidazole-4-carboxamide isomerase.